A 424-amino-acid chain; its full sequence is Elongation factor 1-alpha (424 aa).

Residues 5–223 enclose the tr-type G domain; the sequence is KPHLNLITIG…DAFKVPEKPI (219 aa). The G1 stretch occupies residues 14-21; it reads GHVDHGKS. 14–21 serves as a coordination point for GTP; it reads GHVDHGKS. Position 21 (serine 21) interacts with Mg(2+). Residues 70–74 form a G2 region; that stretch reads GVTID. Residues 91–94 form a G3 region; that stretch reads DAPG. Residues 91 to 95 and 148 to 151 each bind GTP; these read DAPGH and NKMD. The interval 148–151 is G4; it reads NKMD. Residues 187 to 189 form a G5 region; that stretch reads SGY.

This sequence belongs to the TRAFAC class translation factor GTPase superfamily. Classic translation factor GTPase family. EF-Tu/EF-1A subfamily.

Its subcellular location is the cytoplasm. It catalyses the reaction GTP + H2O = GDP + phosphate + H(+). In terms of biological role, GTP hydrolase that promotes the GTP-dependent binding of aminoacyl-tRNA to the A-site of ribosomes during protein biosynthesis. In Thermoplasma volcanium (strain ATCC 51530 / DSM 4299 / JCM 9571 / NBRC 15438 / GSS1), this protein is Elongation factor 1-alpha.